The chain runs to 362 residues: MTKIAFTGGGTVGHVSVNLSLIPIAQERGYEAFYVGSKNGIEREMIESQLPGIQYFPISSGKLRRYISVENIKDVFKVLKGVLDARKVLKKQKPDLLFSKGGFVSVPVVIAARSLNIPVVIHESDITPGLANKISLKFAKKIYTTFEDTLKYLPKEKADFVGATVRDDLKEGNRTNGFQLTGFNDDKKVLLVMGGSLGSKKINELIRQNLDTLLKEYQIIHLTGRGLLDETIQREGYKQFEFVTDELTDLLAITDTVVSRAGANAIYEFLTLNIPMLLIPLGLDQSRGDQIDNAKNFQNKGYAETLPEDQANTTNFIESLHKIESNRSDIEKQMHEYHQLFTKEDLLDKILKDTNQKETRES.

UDP-N-acetyl-alpha-D-glucosamine contacts are provided by R166, S196, and Q290.

The protein belongs to the glycosyltransferase 28 family. MurG subfamily.

The protein localises to the cell membrane. The enzyme catalyses Mur2Ac(oyl-L-Ala-gamma-D-Glu-L-Lys-D-Ala-D-Ala)-di-trans,octa-cis-undecaprenyl diphosphate + UDP-N-acetyl-alpha-D-glucosamine = beta-D-GlcNAc-(1-&gt;4)-Mur2Ac(oyl-L-Ala-gamma-D-Glu-L-Lys-D-Ala-D-Ala)-di-trans,octa-cis-undecaprenyl diphosphate + UDP + H(+). Its pathway is cell wall biogenesis; peptidoglycan biosynthesis. Its function is as follows. Cell wall formation. Catalyzes the transfer of a GlcNAc subunit on undecaprenyl-pyrophosphoryl-MurNAc-pentapeptide (lipid intermediate I) to form undecaprenyl-pyrophosphoryl-MurNAc-(pentapeptide)GlcNAc (lipid intermediate II). In Staphylococcus carnosus (strain TM300), this protein is UDP-N-acetylglucosamine--N-acetylmuramyl-(pentapeptide) pyrophosphoryl-undecaprenol N-acetylglucosamine transferase.